Consider the following 407-residue polypeptide: Large ribosomal subunit protein uL4y (407 aa).

The tract at residues 57 to 96 (PYAVSKKAGHQTSAESWGTGRAVSRIPRVPGGGTHRAGQA) is disordered.

This sequence belongs to the universal ribosomal protein uL4 family.

In Arabidopsis thaliana (Mouse-ear cress), this protein is Large ribosomal subunit protein uL4y (RPL4D).